The sequence spans 302 residues: tRNA dimethylallyltransferase (302 aa).

7 to 14 (GPTASGKS) contributes to the ATP binding site. Residue 9–14 (TASGKS) participates in substrate binding. Interaction with substrate tRNA regions lie at residues 32-35 (DSMQ) and 156-160 (QRILR).

The protein belongs to the IPP transferase family. Monomer. Mg(2+) is required as a cofactor.

The enzyme catalyses adenosine(37) in tRNA + dimethylallyl diphosphate = N(6)-dimethylallyladenosine(37) in tRNA + diphosphate. Functionally, catalyzes the transfer of a dimethylallyl group onto the adenine at position 37 in tRNAs that read codons beginning with uridine, leading to the formation of N6-(dimethylallyl)adenosine (i(6)A). The protein is tRNA dimethylallyltransferase of Beijerinckia indica subsp. indica (strain ATCC 9039 / DSM 1715 / NCIMB 8712).